The chain runs to 231 residues: 5'-methylthioadenosine/S-adenosylhomocysteine nucleosidase (231 aa).

The active-site Proton acceptor is E12. Substrate is bound by residues G78, V153, and 174 to 175 (ME). D198 acts as the Proton donor in catalysis.

It belongs to the PNP/UDP phosphorylase family. MtnN subfamily.

It catalyses the reaction S-adenosyl-L-homocysteine + H2O = S-(5-deoxy-D-ribos-5-yl)-L-homocysteine + adenine. It carries out the reaction S-methyl-5'-thioadenosine + H2O = 5-(methylsulfanyl)-D-ribose + adenine. The catalysed reaction is 5'-deoxyadenosine + H2O = 5-deoxy-D-ribose + adenine. Its pathway is amino-acid biosynthesis; L-methionine biosynthesis via salvage pathway; S-methyl-5-thio-alpha-D-ribose 1-phosphate from S-methyl-5'-thioadenosine (hydrolase route): step 1/2. Functionally, catalyzes the irreversible cleavage of the glycosidic bond in both 5'-methylthioadenosine (MTA) and S-adenosylhomocysteine (SAH/AdoHcy) to adenine and the corresponding thioribose, 5'-methylthioribose and S-ribosylhomocysteine, respectively. Also cleaves 5'-deoxyadenosine, a toxic by-product of radical S-adenosylmethionine (SAM) enzymes, into 5-deoxyribose and adenine. The polypeptide is 5'-methylthioadenosine/S-adenosylhomocysteine nucleosidase (Vibrio parahaemolyticus serotype O3:K6 (strain RIMD 2210633)).